Here is a 160-residue protein sequence, read N- to C-terminus: 2-C-methyl-D-erythritol 2,4-cyclodiphosphate synthase (160 aa).

Residues aspartate 11 and histidine 13 each contribute to the a divalent metal cation site. 4-CDP-2-C-methyl-D-erythritol 2-phosphate contacts are provided by residues 11–13 (DVH) and 37–38 (HS). Histidine 45 contacts a divalent metal cation. Residues 59–61 (DIG), 64–68 (FPDTD), 103–109 (AQAPKMA), 135–138 (TTTE), phenylalanine 142, and arginine 145 each bind 4-CDP-2-C-methyl-D-erythritol 2-phosphate.

This sequence belongs to the IspF family. As to quaternary structure, homotrimer. The cofactor is a divalent metal cation.

It catalyses the reaction 4-CDP-2-C-methyl-D-erythritol 2-phosphate = 2-C-methyl-D-erythritol 2,4-cyclic diphosphate + CMP. It functions in the pathway isoprenoid biosynthesis; isopentenyl diphosphate biosynthesis via DXP pathway; isopentenyl diphosphate from 1-deoxy-D-xylulose 5-phosphate: step 4/6. Involved in the biosynthesis of isopentenyl diphosphate (IPP) and dimethylallyl diphosphate (DMAPP), two major building blocks of isoprenoid compounds. Catalyzes the conversion of 4-diphosphocytidyl-2-C-methyl-D-erythritol 2-phosphate (CDP-ME2P) to 2-C-methyl-D-erythritol 2,4-cyclodiphosphate (ME-CPP) with a corresponding release of cytidine 5-monophosphate (CMP). This Thioalkalivibrio sulfidiphilus (strain HL-EbGR7) protein is 2-C-methyl-D-erythritol 2,4-cyclodiphosphate synthase.